We begin with the raw amino-acid sequence, 359 residues long: DNA replication and repair protein RecF (359 aa).

30 to 37 (GQNAQGKT) is a binding site for ATP.

Belongs to the RecF family.

It is found in the cytoplasm. In terms of biological role, the RecF protein is involved in DNA metabolism; it is required for DNA replication and normal SOS inducibility. RecF binds preferentially to single-stranded, linear DNA. It also seems to bind ATP. This chain is DNA replication and repair protein RecF, found in Lactococcus lactis subsp. cremoris (strain SK11).